We begin with the raw amino-acid sequence, 146 residues long: Hemoglobin subunit beta (146 aa).

At valine 1 the chain carries N-acetylvaline. Positions 2–146 (HLTPEEKTAV…VANALAHKYH (145 aa)) constitute a Globin domain. Residue threonine 12 is modified to Phosphothreonine. Serine 44 carries the phosphoserine modification. Lysine 59 is subject to N6-acetyllysine. Histidine 63 contacts heme b. Lysine 82 is subject to N6-acetyllysine. Position 92 (histidine 92) interacts with heme b. Cysteine 93 is modified (S-nitrosocysteine). An N6-acetyllysine modification is found at lysine 144.

Belongs to the globin family. As to quaternary structure, heterotetramer of two alpha chains and two beta chains. Red blood cells.

Involved in oxygen transport from the lung to the various peripheral tissues. In Mandrillus sphinx (Mandrill), this protein is Hemoglobin subunit beta (HBB).